The following is a 397-amino-acid chain: 3-ketoacyl-CoA thiolase, mitochondrial (397 aa).

The N-terminal 16 residues, 1–16, are a transit peptide targeting the mitochondrion; not cleaved; sequence MALLRGVFVVAAKRTP. Lys25 carries the N6-acetyllysine; alternate modification. Residue Lys25 is modified to N6-succinyllysine; alternate. Lys45 bears the N6-succinyllysine mark. The Acyl-thioester intermediate role is filled by Cys92. Position 119 is a phosphothreonine (Thr119). At Ser121 the chain carries Phosphoserine. A Phosphotyrosine modification is found at Tyr127. Thr136 carries the post-translational modification Phosphothreonine. Lys137 is modified (N6-acetyllysine; alternate). N6-succinyllysine; alternate is present on Lys137. Ser140 carries the post-translational modification Phosphoserine. Residues Lys143, Lys171, Lys191, and Lys209 each carry the N6-acetyllysine; alternate modification. Residues Lys143, Lys171, Lys191, and Lys209 each carry the N6-succinyllysine; alternate modification. Lys211, Lys212, and Lys214 each carry N6-succinyllysine. Arg224 and Thr227 together coordinate CoA. Position 234 is an N6-acetyllysine; alternate (Lys234). Lys234 bears the N6-succinyllysine; alternate mark. An N6-succinyllysine modification is found at Lys240. N6-acetyllysine is present on Lys241. Residue Ser251 coordinates CoA. N6-acetyllysine occurs at positions 269 and 270. Lys305 carries the post-translational modification N6-acetyllysine; alternate. Position 305 is an N6-succinyllysine; alternate (Lys305). A Phosphoserine modification is found at Ser310. N6-acetyllysine; alternate is present on Lys312. Lys312 is subject to N6-succinyllysine; alternate. Ser333 carries the phosphoserine modification. N6-acetyllysine occurs at positions 340 and 375. Cys382 serves as the catalytic Proton donor/acceptor.

It belongs to the thiolase-like superfamily. Thiolase family. In terms of assembly, homotetramer. Interacts with BNIP3.

The protein localises to the mitochondrion. The catalysed reaction is an acyl-CoA + acetyl-CoA = a 3-oxoacyl-CoA + CoA. It catalyses the reaction 2 acetyl-CoA = acetoacetyl-CoA + CoA. It carries out the reaction acetyl-CoA + H2O = acetate + CoA + H(+). The enzyme catalyses propanoyl-CoA + H2O = propanoate + CoA + H(+). The catalysed reaction is butanoyl-CoA + H2O = butanoate + CoA + H(+). It catalyses the reaction hexanoyl-CoA + H2O = hexanoate + CoA + H(+). It carries out the reaction octanoyl-CoA + H2O = octanoate + CoA + H(+). The enzyme catalyses decanoyl-CoA + H2O = decanoate + CoA + H(+). The catalysed reaction is dodecanoyl-CoA + H2O = dodecanoate + CoA + H(+). It catalyses the reaction tetradecanoyl-CoA + H2O = tetradecanoate + CoA + H(+). It carries out the reaction hexadecanoyl-CoA + H2O = hexadecanoate + CoA + H(+). Its pathway is lipid metabolism; fatty acid beta-oxidation. Functionally, in the production of energy from fats, this is one of the enzymes that catalyzes the last step of the mitochondrial beta-oxidation pathway, an aerobic process breaking down fatty acids into acetyl-CoA. Using free coenzyme A/CoA, catalyzes the thiolytic cleavage of medium- to long-chain unbranched 3-oxoacyl-CoAs into acetyl-CoA and a fatty acyl-CoA shortened by two carbon atoms. Also catalyzes the condensation of two acetyl-CoA molecules into acetoacetyl-CoA and could be involved in the production of ketone bodies. Also displays hydrolase activity on various fatty acyl-CoAs. Thereby, could be responsible for the production of acetate in a side reaction to beta-oxidation. Abolishes BNIP3-mediated apoptosis and mitochondrial damage. This Homo sapiens (Human) protein is 3-ketoacyl-CoA thiolase, mitochondrial (ACAA2).